We begin with the raw amino-acid sequence, 223 residues long: MSSLSKPNRQFLSPTTNNQDTGREQTIACARDMVVLYNECLKNHAVSLGGHALDGCGEFTPKSTTILTDPPSLRCDACGCHRNFHRRSPSDGFSQHRSPPSPLQLQPLAPVPNLLLSLSSGFFGPSDQEVKNKFTVERDVRKTAMIKKHKRTKFTAEQKVKMRGFAERAGWKINGWDEKWVREFCSEVGIERKVLKVWIHNNKYFNNGRSRDTTSSMSLNLKL.

Residues 1 to 20 show a composition bias toward polar residues; the sequence is MSSLSKPNRQFLSPTTNNQD. The tract at residues 1-24 is disordered; the sequence is MSSLSKPNRQFLSPTTNNQDTGRE. The ZF-HD dimerization-type; degenerate zinc finger occupies 37–88; sequence YNECLKNHAVSLGGHALDGCGEFTPKSTTILTDPPSLRCDACGCHRNFHRRS. Positions 147–204 form a DNA-binding region, homeobox; atypical; sequence KKHKRTKFTAEQKVKMRGFAERAGWKINGWDEKWVREFCSEVGIERKVLKVWIHNNKY.

Homo- and heterodimer with other ZFHD proteins. Interacts with ZHD11.

Its subcellular location is the nucleus. Putative transcription factor. The sequence is that of Zinc-finger homeodomain protein 12 (ZHD12) from Arabidopsis thaliana (Mouse-ear cress).